A 682-amino-acid polypeptide reads, in one-letter code: DNA-directed RNA polymerase subunit beta' (682 aa).

4 residues coordinate Zn(2+): Cys-69, Cys-71, Cys-87, and Cys-90. Mg(2+) is bound by residues Asp-489, Asp-491, and Asp-493.

It belongs to the RNA polymerase beta' chain family. RpoC1 subfamily. In plastids the minimal PEP RNA polymerase catalytic core is composed of four subunits: alpha, beta, beta', and beta''. When a (nuclear-encoded) sigma factor is associated with the core the holoenzyme is formed, which can initiate transcription. Requires Mg(2+) as cofactor. The cofactor is Zn(2+).

Its subcellular location is the plastid. It localises to the chloroplast. The enzyme catalyses RNA(n) + a ribonucleoside 5'-triphosphate = RNA(n+1) + diphosphate. DNA-dependent RNA polymerase catalyzes the transcription of DNA into RNA using the four ribonucleoside triphosphates as substrates. The chain is DNA-directed RNA polymerase subunit beta' from Acorus calamus var. americanus (American sweet flag).